The primary structure comprises 246 residues: tRNA (guanine-N(1)-)-methyltransferase (246 aa).

Residues Gly114 and 134 to 139 (IGDYIL) contribute to the S-adenosyl-L-methionine site.

Belongs to the RNA methyltransferase TrmD family. In terms of assembly, homodimer.

It is found in the cytoplasm. The enzyme catalyses guanosine(37) in tRNA + S-adenosyl-L-methionine = N(1)-methylguanosine(37) in tRNA + S-adenosyl-L-homocysteine + H(+). In terms of biological role, specifically methylates guanosine-37 in various tRNAs. The sequence is that of tRNA (guanine-N(1)-)-methyltransferase from Coxiella burnetii (strain CbuG_Q212) (Coxiella burnetii (strain Q212)).